The chain runs to 40 residues: Photosystem II reaction center protein J (40 aa).

Residues 8–28 (IPLWLIGTVTGIIVIGLLGVF) traverse the membrane as a helical segment.

This sequence belongs to the PsbJ family. In terms of assembly, PSII is composed of 1 copy each of membrane proteins PsbA, PsbB, PsbC, PsbD, PsbE, PsbF, PsbH, PsbI, PsbJ, PsbK, PsbL, PsbM, PsbT, PsbX, PsbY, PsbZ, Psb30/Ycf12, at least 3 peripheral proteins of the oxygen-evolving complex and a large number of cofactors. It forms dimeric complexes.

It localises to the plastid. The protein resides in the chloroplast thylakoid membrane. In terms of biological role, one of the components of the core complex of photosystem II (PSII). PSII is a light-driven water:plastoquinone oxidoreductase that uses light energy to abstract electrons from H(2)O, generating O(2) and a proton gradient subsequently used for ATP formation. It consists of a core antenna complex that captures photons, and an electron transfer chain that converts photonic excitation into a charge separation. The chain is Photosystem II reaction center protein J from Pinus thunbergii (Japanese black pine).